The following is a 109-amino-acid chain: Nucleoid-associated protein APL_0075 (109 aa).

Residues 1-21 (MFGKGGLGGLMKQAQQMQERM) form a disordered region. Residues 10–19 (LMKQAQQMQE) are compositionally biased toward low complexity.

Belongs to the YbaB/EbfC family. Homodimer.

It is found in the cytoplasm. It localises to the nucleoid. Its function is as follows. Binds to DNA and alters its conformation. May be involved in regulation of gene expression, nucleoid organization and DNA protection. This is Nucleoid-associated protein APL_0075 from Actinobacillus pleuropneumoniae serotype 5b (strain L20).